A 236-amino-acid polypeptide reads, in one-letter code: Rho-related GTP-binding protein RhoV (236 aa).

The interval 1–28 (MPPRELSEAEPPPLPASTPPPRRRSAPP) is disordered. Residues 10–20 (EPPPLPASTPP) show a composition bias toward pro residues. Ser25 is subject to Phosphoserine. Residues 38–45 (GDGAVGKS), 85–89 (DTAGQ), and 143–146 (TQAD) each bind GTP. Cys234 carries the S-palmitoyl cysteine lipid modification.

It belongs to the small GTPase superfamily. Rho family. In terms of assembly, interacts with PAK2. It depends on Mg(2+) as a cofactor. In terms of tissue distribution, highly expressed in brain and testis and at lower levels in spleen and lung.

The protein resides in the cell membrane. Its subcellular location is the endosome membrane. Plays a role in the control of the actin cytoskeleton via activation of the JNK pathway. The sequence is that of Rho-related GTP-binding protein RhoV from Rattus norvegicus (Rat).